Reading from the N-terminus, the 526-residue chain is Delayed-rectifier potassium channel regulatory subunit KCNS1 (526 aa).

Topologically, residues 1-217 (MLMLLVRGTH…LTMENPGYSL (217 aa)) are cytoplasmic. The chain crosses the membrane as a helical span at residues 218 to 239 (PSKLFSCVSISVVLASIAAMCI). Topologically, residues 240 to 270 (HSLPEYQAREAAAAVAAVAAGRSPEGVRDDP) are extracellular. Residues 271 to 293 (VLRRLEYFCIAWFSFEVSSRLLL) form a helical membrane-spanning segment. The Cytoplasmic segment spans residues 294–304 (APSTRNFFCHP). A helical transmembrane segment spans residues 305–322 (LNLIDIVSVLPFYLTLLA). Residues 323–337 (GVALGDQGGKEFGHL) lie on the Extracellular side of the membrane. A helical; Voltage-sensor transmembrane segment spans residues 338–358 (GKVVQVFRLMRIFRVLKLARH). Residues 359 to 373 (STGLRSLGATLKHSY) lie on the Cytoplasmic side of the membrane. Residues 374–395 (REVGILLLYLAVGVSVFSGVAY) form a helical membrane-spanning segment. The Extracellular segment spans residues 396–408 (TAEKEEDVGFNTI). The helical intramembrane region spans 409–420 (PACWWWGTVSMT). Residues 421 to 426 (TVGYGD) carry the Selectivity filter motif. An intramembrane segment occupies 421–428 (TVGYGDVV). Over 429–435 (PVTVAGK) the chain is Extracellular. A helical transmembrane segment spans residues 436–464 (LAASGCILGGILVVALPITIIFNKFSHFY). Residues 465–526 (RRQKALEAAV…PSEPPHPQRY (62 aa)) lie on the Cytoplasmic side of the membrane. Positions 492–526 (VSEASLETSGETSQEGRSADLESQAPSEPPHPQRY) are disordered. Positions 496–507 (SLETSGETSQEG) are enriched in polar residues.

It belongs to the potassium channel family. S (TC 1.A.1.2) subfamily. Kv9.1/KCNS1 sub-subfamily. In terms of assembly, heterotetramer with KCNB1. Heterotetramer with KCNB2. Does not form homomultimers.

It is found in the cell membrane. In terms of biological role, potassium channel regulatory subunit that modulate the delayed rectifier voltage-gated potassium channel activity of KCNB1 and KCNB2 by altering their kinetics, expression levels, and shifting the half-inactivation potential to more polarized values. While it does not form functional channels on its own, it can form functional heterotetrameric channels with KCNB1 and KCNB2. Each regulatory subunit has unique regulatory properties that can lead to extensive inhibition, significant changes in kinetics, and/or substantial shifts in the voltage dependencies of the inactivation process. The protein is Delayed-rectifier potassium channel regulatory subunit KCNS1 of Gorilla gorilla gorilla (Western lowland gorilla).